Here is a 162-residue protein sequence, read N- to C-terminus: Phosphopantetheine adenylyltransferase (162 aa).

Substrate is bound at residue threonine 9. Residues 9 to 10 (TF) and histidine 17 contribute to the ATP site. Substrate contacts are provided by lysine 41, leucine 77, and arginine 91. ATP-binding positions include 92–94 (GLR), glutamate 102, and 127–133 (RQAIASK).

Belongs to the bacterial CoaD family. In terms of assembly, homohexamer. It depends on Mg(2+) as a cofactor.

Its subcellular location is the cytoplasm. It catalyses the reaction (R)-4'-phosphopantetheine + ATP + H(+) = 3'-dephospho-CoA + diphosphate. It functions in the pathway cofactor biosynthesis; coenzyme A biosynthesis; CoA from (R)-pantothenate: step 4/5. Functionally, reversibly transfers an adenylyl group from ATP to 4'-phosphopantetheine, yielding dephospho-CoA (dPCoA) and pyrophosphate. The sequence is that of Phosphopantetheine adenylyltransferase from Cereibacter sphaeroides (strain ATCC 17025 / ATH 2.4.3) (Rhodobacter sphaeroides).